The sequence spans 150 residues: Large ribosomal subunit protein bL9 (150 aa).

It belongs to the bacterial ribosomal protein bL9 family.

Binds to the 23S rRNA. The protein is Large ribosomal subunit protein bL9 of Lactiplantibacillus plantarum (strain ATCC BAA-793 / NCIMB 8826 / WCFS1) (Lactobacillus plantarum).